A 188-amino-acid polypeptide reads, in one-letter code: GTPase KRas (188 aa).

Met-1 is subject to N-acetylmethionine. Thr-2 bears the N-acetylthreonine; in GTPase KRas, N-terminally processed mark. Residues Gly-10–Ala-18, Val-29–Thr-35, and Ala-59–Gly-60 contribute to the GTP site. The Effector region motif lies at Tyr-32 to Tyr-40. Position 104 is an N6-acetyllysine (Lys-104). Asn-116 to Asp-119 contacts GTP. Positions His-166–Cys-185 are hypervariable region. The tract at residues Lys-167 to Met-188 is disordered. Cysteine methyl ester is present on Cys-185. A lipid anchor (S-farnesyl cysteine) is attached at Cys-185. Residues Ile-186–Met-188 constitute a propeptide, removed in mature form.

This sequence belongs to the small GTPase superfamily. Ras family. Interacts with PHLPP. Interacts (active GTP-bound form preferentially) with RGS14. Interacts (when farnesylated) with PDE6D; this promotes dissociation from the cell membrane. Interacts with SOS1. Interacts (when farnesylated) with GPR31. Interacts with RAP1GDS1. Interacts (active GTP-bound form) with both SHOC2 and PP1c (all isoforms) to form a tertiary complex; SHOC2 and PP1c preferably bind M-Ras/MRAS, but they also bind K-Ras/KRAS, N-Ras/NRAS and H-Ras/HRAS. Interacts (GTP-bound form) with MAPKAP1/SIN1; inhibiting K-Ras/KRAS activity. Post-translationally, acetylation at Lys-104 prevents interaction with guanine nucleotide exchange factors (GEFs).

Its subcellular location is the cell membrane. It localises to the cytoplasm. The protein localises to the cytosol. The enzyme catalyses GTP + H2O = GDP + phosphate + H(+). With respect to regulation, alternates between an inactive form bound to GDP and an active form bound to GTP. Activated by a guanine nucleotide-exchange factor (GEF) and inactivated by a GTPase-activating protein (GAP). Interaction with SOS1 promotes exchange of bound GDP to GTP. Functionally, ras proteins bind GDP/GTP and possess intrinsic GTPase activity. Plays an important role in the regulation of cell proliferation. Plays a role in promoting oncogenic events by inducing transcriptional silencing of tumor suppressor genes (TSGs) in colorectal cancer (CRC) cells in a ZNF304-dependent manner. The polypeptide is GTPase KRas (KRAS) (Monodelphis domestica (Gray short-tailed opossum)).